A 159-amino-acid chain; its full sequence is Nucleotide-binding protein PLES_47741 (159 aa).

It belongs to the YajQ family.

Functionally, nucleotide-binding protein. The polypeptide is Nucleotide-binding protein PLES_47741 (Pseudomonas aeruginosa (strain LESB58)).